A 446-amino-acid polypeptide reads, in one-letter code: Probable E3 ubiquitin-protein ligase XBOS31 (446 aa).

5 ANK repeats span residues 46-75 (DRFTALHIAAANGRLQVLSMLLDRDGDVDV), 79-108 (KKQTPLMVAAMRGNTECVVRLLRGGANVLT), 113-142 (RARTCLHHAAYYGHAECLQAILGAAAQAQG), 160-189 (RGATPLHLAARHARASCVRLLLDKGAIVSA), and 197-227 (PGSTALHLAARAGSMECIRELLAWGADRLQR). Residues 317 to 366 (CNICFEQACSMEVKECGHQMCAACTLAICCHSKPNPKTLLLHPPACPFCR) form an RING-type zinc finger. The disordered stretch occupies residues 376–401 (TTNSNKTNSRRRSRSRSSSFKGGLSS).

The catalysed reaction is S-ubiquitinyl-[E2 ubiquitin-conjugating enzyme]-L-cysteine + [acceptor protein]-L-lysine = [E2 ubiquitin-conjugating enzyme]-L-cysteine + N(6)-ubiquitinyl-[acceptor protein]-L-lysine.. It participates in protein modification; protein ubiquitination. The sequence is that of Probable E3 ubiquitin-protein ligase XBOS31 (XBOS31) from Oryza sativa subsp. japonica (Rice).